A 614-amino-acid polypeptide reads, in one-letter code: FAD-dependent monooxygenase terD (614 aa).

An N-terminal signal peptide occupies residues 1-23 (MSSKFDVVICGSGTAGLAAATWL). FAD contacts are provided by residues 6–35 (DVVI…ILES), Gln-44, Val-137, and 239–241 (RVY). N-linked (GlcNAc...) asparagine glycosylation is present at Asn-260. Residues Tyr-282 and Asp-303 each coordinate FAD. Residue Asn-317 is glycosylated (N-linked (GlcNAc...) asparagine). An FAD-binding site is contributed by Ser-319. The N-linked (GlcNAc...) asparagine glycan is linked to Asn-602.

This sequence belongs to the PheA/TfdB FAD monooxygenase family. The cofactor is FAD.

It functions in the pathway secondary metabolite biosynthesis. Its function is as follows. FAD-dependent monooxygenase; part of the gene cluster that mediates the biosynthesis of terrein, a fungal metabolite with ecological, antimicrobial, antiproliferative, and antioxidative activities. The first step in the pathway is performed by the polyketide synthase terA that produces 4-hydroxy-6-methylpyranon (4-HMP), orsellinic acid (OA), and 2,3-dehydro-6-hydroxymellein (2,3-dehydro-6-HM) by condensing acetyl-CoA with two, three, or four malonyl-CoA units, respectively. 4-HMP and OA are not pathway intermediates, but are rather shunt or side products. 2,3-dehydro-6-HM is further converted to 6-hydroxymellein (6-HM) by the 6-hydroxymellein synthase terB. The monooxygenases terC and terD, the multicopper oxidase terE and the Kelch-like protein terF are then involved in the transformation of 6-HM to terrein. Even if they are co-regulated with the other terrein cluster genes, terH and terI seem to be dispensable for terrein production; whereas one or both of the 2 transporters terG and terJ are probably required for efficient secretion of metabolites. This Aspergillus terreus (strain NIH 2624 / FGSC A1156) protein is FAD-dependent monooxygenase terD.